A 443-amino-acid chain; its full sequence is Glutamate--tRNA ligase 1 (443 aa).

Positions 9-19 (PSPTGYLHVGN) match the 'HIGH' region motif. Residues 238–242 (KISKR) carry the 'KMSKS' region motif. Residue K241 coordinates ATP.

This sequence belongs to the class-I aminoacyl-tRNA synthetase family. Glutamate--tRNA ligase type 1 subfamily. In terms of assembly, monomer.

The protein resides in the cytoplasm. It carries out the reaction tRNA(Glu) + L-glutamate + ATP = L-glutamyl-tRNA(Glu) + AMP + diphosphate. Catalyzes the attachment of glutamate to tRNA(Glu) in a two-step reaction: glutamate is first activated by ATP to form Glu-AMP and then transferred to the acceptor end of tRNA(Glu). The sequence is that of Glutamate--tRNA ligase 1 from Ehrlichia ruminantium (strain Welgevonden).